The sequence spans 432 residues: Enolase (432 aa).

Glutamine 167 lines the (2R)-2-phosphoglycerate pocket. Glutamate 209 serves as the catalytic Proton donor. Mg(2+)-binding residues include aspartate 246, glutamate 291, and aspartate 318. Lysine 343, arginine 372, serine 373, and lysine 394 together coordinate (2R)-2-phosphoglycerate. Lysine 343 serves as the catalytic Proton acceptor.

It belongs to the enolase family. Component of the RNA degradosome, a multiprotein complex involved in RNA processing and mRNA degradation. Mg(2+) is required as a cofactor.

The protein localises to the cytoplasm. It localises to the secreted. It is found in the cell surface. The catalysed reaction is (2R)-2-phosphoglycerate = phosphoenolpyruvate + H2O. It functions in the pathway carbohydrate degradation; glycolysis; pyruvate from D-glyceraldehyde 3-phosphate: step 4/5. Its function is as follows. Catalyzes the reversible conversion of 2-phosphoglycerate (2-PG) into phosphoenolpyruvate (PEP). It is essential for the degradation of carbohydrates via glycolysis. This Aliivibrio fischeri (strain MJ11) (Vibrio fischeri) protein is Enolase.